Consider the following 378-residue polypeptide: Glutamate 5-kinase (378 aa).

Residue lysine 19 participates in ATP binding. Substrate-binding residues include serine 59, aspartate 146, and asparagine 158. 178 to 179 (TD) contacts ATP. One can recognise a PUA domain in the interval 285–363 (RGSVAVDAGA…SEFERLLGYT (79 aa)).

The protein belongs to the glutamate 5-kinase family.

It is found in the cytoplasm. The catalysed reaction is L-glutamate + ATP = L-glutamyl 5-phosphate + ADP. Its pathway is amino-acid biosynthesis; L-proline biosynthesis; L-glutamate 5-semialdehyde from L-glutamate: step 1/2. Its function is as follows. Catalyzes the transfer of a phosphate group to glutamate to form L-glutamate 5-phosphate. The polypeptide is Glutamate 5-kinase (Polaromonas sp. (strain JS666 / ATCC BAA-500)).